Reading from the N-terminus, the 207-residue chain is Large ribosomal subunit protein uL3c (207 aa).

Positions 129 to 148 (TRGPMTHGSKNHRAPGSIGM) are disordered.

The protein belongs to the universal ribosomal protein uL3 family. Part of the 50S ribosomal subunit.

It localises to the plastid. Its subcellular location is the chloroplast. Functionally, one of the primary rRNA binding proteins, it binds directly near the 3'-end of the 23S rRNA, where it nucleates assembly of the 50S subunit. This chain is Large ribosomal subunit protein uL3c (rpl3), found in Phaeodactylum tricornutum (strain CCAP 1055/1).